An 87-amino-acid chain; its full sequence is Small ribosomal subunit protein bS20 (87 aa).

A disordered region spans residues 1-22; it reads MANSAQARKRARQAVKQRAHNA. The segment covering 7–19 has biased composition (basic residues); sequence ARKRARQAVKQRA.

It belongs to the bacterial ribosomal protein bS20 family.

Functionally, binds directly to 16S ribosomal RNA. This Methylobacillus flagellatus (strain ATCC 51484 / DSM 6875 / VKM B-1610 / KT) protein is Small ribosomal subunit protein bS20.